We begin with the raw amino-acid sequence, 311 residues long: Histidine decarboxylase proenzyme (311 aa).

Residues D64 and S82 each coordinate substrate. S83 carries the post-translational modification Pyruvic acid (Ser). Residue E198 is the Proton donor of the active site.

As to quaternary structure, the proenzyme is a hexamer of identical pi chains; each pi chain monomer is cleaved to form a small (or beta) chain and a large (or alpha) chain by non-hydrolytic self-catalysis. Pyruvate serves as cofactor.

It catalyses the reaction L-histidine + H(+) = histamine + CO2. The protein is Histidine decarboxylase proenzyme (hdcA) of Lactobacillus sp. (strain 30a).